We begin with the raw amino-acid sequence, 430 residues long: Transcription factor E2F1 (430 aa).

The segment at 62–103 (ATPQAPRPAPSAPRPALGRPPVKRRLDLETDHQYLAGSSGPF) is cyclin A:CDK2 binding. The segment at 84-186 (KRRLDLETDH…KKSKNHIQWL (103 aa)) is interaction with BIRC2/c-IAP1. The interval 95–123 (YLAGSSGPFRGRGRHPGKGVKSPGEKSRY) is disordered. The DNA-binding element occupies 105–189 (GRGRHPGKGV…KNHIQWLGSH (85 aa)). Residues Lys-112, Lys-115, and Lys-120 each carry the N6-acetyllysine modification. The leucine-zipper stretch occupies residues 148–169 (LNWAAEVLKVQKRRIYDITNVL). The DEF box signature appears at 153-189 (EVLKVQKRRIYDITNVLEGIQLIAKKSKNHIQWLGSH). Lys-180 is subject to N6-methyllysine; by SETD7. The required for interaction with TRIM28 stretch occupies residues 187–375 (GSHTMVGIGK…QLSPLVAADS (189 aa)). The tract at residues 190–279 (TMVGIGKRLE…AVDSSETFQI (90 aa)) is dimerization. The tract at residues 294-340 (PEESADGISPGKTSCQETSSGEDRTADSGPAGPPPSPPSTSPALDPS) is disordered. Over residues 324 to 333 (AGPPPSPPST) the composition is skewed to pro residues. A transactivation region spans residues 361-430 (PMEEDQLSPL…DFGDLTPLDF (70 aa)). A phosphoserine mark is found at Ser-368 and Ser-396. The tract at residues 402–419 (LDYHFGLEEGEGIRDLFD) is RB1 binding. Position 426 is a phosphothreonine (Thr-426).

It belongs to the E2F/DP family. As to quaternary structure, component of the DRTF1/E2F transcription factor complex. Forms heterodimers with DP family members. The E2F1 complex binds specifically hypophosphorylated RB1, the interaction represses E2F1-driven transcription. During the cell cycle, RB1 becomes phosphorylated in mid-to-late G1 phase, detaches from the DRTF1/E2F complex, rendering E2F transcriptionally active. Interacts with TRRAP, which probably mediates its interaction with histone acetyltransferase complexes, leading to transcription activation. Binds TOPBP1 and EAPP. Interacts with ARID3A. Interacts with TRIM28; the interaction inhibits E2F1 acetylation through recruiting HDAC1 and represses its transcriptional activity. Interaction with KAT2B; the interaction acetylates E2F1 enhancing its DNA-binding and transcriptional activity. Interacts with BIRC2/c-IAP1 (via BIR domains). The complex TFDP1:E2F1 interacts with CEBPA; the interaction prevents CEBPA binding to target genes promoters and represses its transcriptional activity. Interacts with RRP1B. Interacts with HCFC1. Interacts with KMT2E; the interaction is probably indirect and is mediated via HCFC1. Interacts with DCAF5 and L3MBTL3; the interaction requires methylation at Lys-180 and is necessary to target E2F1 for ubiquitination by the CRL4-DCAF5 E3 ubiquitin ligase complex. In terms of processing, phosphorylated by CDK2 and cyclin A-CDK2 in the S-phase. Phosphorylation by CHEK2 stabilizes E2F1 upon DNA damage and regulates its effect on transcription and apoptosis. Phosphorylation at Ser-396 by GSK3B promotes interaction with USP11, leading to its deubiquitination and stabilization. Ubiquitinated via 'Lys-63'-linked ubiquitin, leading to its degradation. Deubiquitinated by USP11 following phosphorylation by GSK3B, promoting its stability. Post-translationally, acetylation stimulates DNA-binding. Enhanced under stress conditions such as DNA damage and inhibited by retinoblastoma protein RB1. Regulated by KAP1/TRIM28 which recruits HDAC1 to E2F1 resulting in deacetylation. Acetylated by P/CAF/KAT2B. In terms of processing, methylation at Lys-180 by SETD7 promotes E2F1 ubiquitin-dependent proteasomal degradation.

The protein localises to the nucleus. Its activity is regulated as follows. BIRC2/c-IAP1 stimulates its transcriptional activity. Its function is as follows. Transcription activator that binds DNA cooperatively with DP proteins through the E2 recognition site, 5'-TTTC[CG]CGC-3' found in the promoter region of a number of genes whose products are involved in cell cycle regulation or in DNA replication. The DRTF1/E2F complex functions in the control of cell-cycle progression from G1 to S phase. E2F1 binds preferentially RB1 in a cell-cycle dependent manner. It can mediate both cell proliferation and TP53/p53-dependent apoptosis. Blocks adipocyte differentiation by binding to specific promoters repressing CEBPA binding to its target gene promoters. Directly activates transcription of PEG10. Positively regulates transcription of RRP1B. The polypeptide is Transcription factor E2F1 (Mus musculus (Mouse)).